Reading from the N-terminus, the 140-residue chain is uncharacterized protein (140 aa).

18–25 (GTNGSGKS) lines the ATP pocket.

This is an uncharacterized protein from Haemophilus influenzae (strain ATCC 51907 / DSM 11121 / KW20 / Rd).